The sequence spans 2365 residues: TRIO and F-actin-binding protein (2365 aa).

Disordered regions lie at residues 48–1106 (VPYC…HEPL), 1168–1554 (HRDA…SERR), 1593–1667 (LPRK…WPKI), and 1679–1751 (AGLE…TSWR). A compositionally biased stretch (low complexity) spans 132–151 (SDPTSSPDSATPDDTSNSSS). His-221 bears the Phosphothreonine mark. Polar residues-rich tracts occupy residues 239 to 271 (TLTQASSMTPHSGPRSTTSQASPAQRDTAQAAS), 291 to 375 (RASS…TPQR), 403 to 422 (RTSCAQRDNPKASRTSSPNR), 429 to 471 (RTSC…SPNR), 478 to 520 (RTSC…SPNR), 527 to 569 (RTSC…SPNR), 576 to 618 (RTSC…SPNR), 625 to 650 (RTSCAQRDNPRASSPNRTTQQDSPRT), 661 to 674 (SSPNRTIQQENPRT), 683 to 701 (RASSPSRTIQQENPRTSCA), 709 to 722 (SSPNRTTQQENPRT), 745 to 785 (RTSC…SPNR), and 807 to 837 (IRATQQDNPRTCIQQNIPRSSSTQQDNPKTS). The essentiel for its aggregation stretch occupies residues 324–348 (STQEDTPRASSTQWNTPRASSPSRS). A Phosphothreonine modification is found at Gln-457. Over residues 839-854 (TKRDNLRPTCTQRDRT) the composition is skewed to basic and acidic residues. 3 stretches are compositionally biased toward polar residues: residues 855–898 (QSFS…SSPH), 913–927 (PTQSDGPRTSSPSRS), and 945–994 (DRPQ…TSSP). Basic and acidic residues predominate over residues 1045–1056 (RAPESEPPHHEP). A compositionally biased stretch (polar residues) spans 1195-1206 (SMESLAPSTDSL). 2 stretches are compositionally biased toward basic and acidic residues: residues 1260-1270 (ETRHNLEREEY) and 1303-1319 (GRAEVERLFGQERRKSE). Residues 1332–1349 (SQQPSQGQSQLLRRQSSP) show a composition bias toward low complexity. Composition is skewed to basic and acidic residues over residues 1378 to 1387 (SPEKRPEGDR) and 1402 to 1411 (TPERELRTQR). The span at 1452-1461 (GGLGPGGWWG) shows a compositional bias: gly residues. The segment covering 1494–1508 (WEEKPTHELPRELGK) has biased composition (basic and acidic residues). A compositionally biased stretch (polar residues) spans 1524–1534 (ESSQSWHSGTP). The segment covering 1594–1606 (PRKDPAGHRDDLA) has biased composition (basic and acidic residues). Over residues 1645-1664 (ALQSQSPVQLPSPACTSTQW) the composition is skewed to polar residues. Over residues 1696-1705 (PSLPELQFQP) the composition is skewed to low complexity. Residues 1724-1735 (KQADSADKRPAE) show a composition bias toward basic and acidic residues. Positions 1778-1887 (LNFKKGWMSI…WIEALRKTVR (110 aa)) constitute a PH domain. Ser-1796 bears the Phosphoserine mark. Disordered stretches follow at residues 1889–2017 (TSAP…LTED) and 2174–2194 (LSKTRSLQQGPDGLRKQHQSD). Arg-1930 carries the omega-N-methylarginine modification. Residues Ser-1949 and Ser-1955 each carry the phosphoserine modification. A compositionally biased stretch (basic and acidic residues) spans 1965–1997 (TPDRLAKQEELERDLAQRSEERRKWFEATDSRT). 2 coiled-coil regions span residues 2062–2247 (SDGH…NQEL) and 2281–2361 (ELEV…SMRN).

In terms of assembly, isoform 1 forms aggregates. Isoform 1 binds to TRIO and F-actin. Isoform 1 may also interact with myosin II. Interacts with HECTD3. Interacts with PJVK. Interacts with TERF1; mediates TERF1 localization to the centrosome. Ubiquitinated by HECTD3, leading to its degradation by the proteasome. In terms of processing, phosphorylation at Thr-457 by PLK1 ensures mitotic progression and is essential for accurate chromosome segregation. Phosphorylation at residues Thr-221 and Thr-457 by kinase NEK2A and PLK1 coordinates TERF1 translocation from telomere to spindle pole. In terms of tissue distribution, widely expressed. Highly expressed in heart and placenta. As to expression, expressed in fetal brain, retina and cochlea but is not detectable in the other tissues.

It localises to the nucleus. The protein resides in the cytoplasm. Its subcellular location is the cytoskeleton. It is found in the microtubule organizing center. The protein localises to the centrosome. It localises to the midbody. The protein resides in the chromosome. Its subcellular location is the telomere. Functionally, regulates actin cytoskeletal organization, cell spreading and cell contraction by directly binding and stabilizing filamentous F-actin and prevents its depolymerization. May also serve as a linker protein to recruit proteins required for F-actin formation and turnover. Essential for correct mitotic progression. Its function is as follows. Plays a pivotal role in the formation of stereocilia rootlets. This chain is TRIO and F-actin-binding protein (TRIOBP), found in Homo sapiens (Human).